A 261-amino-acid polypeptide reads, in one-letter code: Proteasome subunit alpha type-4 (261 aa).

Phosphoserine occurs at positions 13 and 75. An N6-acetyllysine modification is found at Lys-127. Ser-173 is modified (phosphoserine). Residue Lys-176 is modified to N6-acetyllysine. The disordered stretch occupies residues 240–261 (HEEEEAKAEREKKEKEQREKDK).

It belongs to the peptidase T1A family. In terms of assembly, the 26S proteasome consists of a 20S proteasome core and two 19S regulatory subunits. The 20S proteasome core is a barrel-shaped complex made of 28 subunits that are arranged in four stacked rings. The two outer rings are each formed by seven alpha subunits, and the two inner rings are formed by seven beta subunits. The proteolytic activity is exerted by three beta-subunits PSMB5, PSMB6 and PSMB7. As to expression, ubiquitous.

It localises to the cytoplasm. It is found in the nucleus. Functionally, component of the 20S core proteasome complex involved in the proteolytic degradation of most intracellular proteins. This complex plays numerous essential roles within the cell by associating with different regulatory particles. Associated with two 19S regulatory particles, forms the 26S proteasome and thus participates in the ATP-dependent degradation of ubiquitinated proteins. The 26S proteasome plays a key role in the maintenance of protein homeostasis by removing misfolded or damaged proteins that could impair cellular functions, and by removing proteins whose functions are no longer required. Associated with the PA200 or PA28, the 20S proteasome mediates ubiquitin-independent protein degradation. This type of proteolysis is required in several pathways including spermatogenesis (20S-PA200 complex) or generation of a subset of MHC class I-presented antigenic peptides (20S-PA28 complex). This is Proteasome subunit alpha type-4 (Psma4) from Rattus norvegicus (Rat).